Here is a 251-residue protein sequence, read N- to C-terminus: Hydroxyacylglutathione hydrolase (251 aa).

Residues H54, H56, D58, H59, H113, D140, and H178 each contribute to the Zn(2+) site.

This sequence belongs to the metallo-beta-lactamase superfamily. Glyoxalase II family. As to quaternary structure, monomer. Requires Zn(2+) as cofactor.

The enzyme catalyses an S-(2-hydroxyacyl)glutathione + H2O = a 2-hydroxy carboxylate + glutathione + H(+). Its pathway is secondary metabolite metabolism; methylglyoxal degradation; (R)-lactate from methylglyoxal: step 2/2. In terms of biological role, thiolesterase that catalyzes the hydrolysis of S-D-lactoyl-glutathione to form glutathione and D-lactic acid. The polypeptide is Hydroxyacylglutathione hydrolase (Synechococcus sp. (strain CC9902)).